The following is a 488-amino-acid chain: Glutamate--tRNA ligase (488 aa).

A 'HIGH' region motif is present at residues Pro-16–Thr-26. The 'KMSKS' region signature appears at Lys-257–Arg-261. ATP is bound at residue Lys-260.

Belongs to the class-I aminoacyl-tRNA synthetase family. Glutamate--tRNA ligase type 1 subfamily. Monomer.

Its subcellular location is the cytoplasm. The catalysed reaction is tRNA(Glu) + L-glutamate + ATP = L-glutamyl-tRNA(Glu) + AMP + diphosphate. In terms of biological role, catalyzes the attachment of glutamate to tRNA(Glu) in a two-step reaction: glutamate is first activated by ATP to form Glu-AMP and then transferred to the acceptor end of tRNA(Glu). In Rhizobium etli (strain ATCC 51251 / DSM 11541 / JCM 21823 / NBRC 15573 / CFN 42), this protein is Glutamate--tRNA ligase.